We begin with the raw amino-acid sequence, 310 residues long: D-erythrulose 1-phosphate 3-epimerase (310 aa).

The catalysed reaction is D-erythrulose 1-phosphate = L-erythrulose 1-phosphate. It functions in the pathway carbohydrate metabolism; erythritol degradation. Its function is as follows. Catalyzes the racemization of D-erythrulose 1-phosphate to L-erythrulose 1-phosphate. The polypeptide is D-erythrulose 1-phosphate 3-epimerase (Brucella abortus (strain 2308)).